The primary structure comprises 126 residues: Aspartate 1-decarboxylase (126 aa).

S25 functions as the Schiff-base intermediate with substrate; via pyruvic acid in the catalytic mechanism. Position 25 is a pyruvic acid (Ser) (S25). T57 serves as a coordination point for substrate. Y58 functions as the Proton donor in the catalytic mechanism. Residue G73–A75 participates in substrate binding.

This sequence belongs to the PanD family. As to quaternary structure, heterooctamer of four alpha and four beta subunits. Requires pyruvate as cofactor. Post-translationally, is synthesized initially as an inactive proenzyme, which is activated by self-cleavage at a specific serine bond to produce a beta-subunit with a hydroxyl group at its C-terminus and an alpha-subunit with a pyruvoyl group at its N-terminus.

It is found in the cytoplasm. The catalysed reaction is L-aspartate + H(+) = beta-alanine + CO2. It participates in cofactor biosynthesis; (R)-pantothenate biosynthesis; beta-alanine from L-aspartate: step 1/1. In terms of biological role, catalyzes the pyruvoyl-dependent decarboxylation of aspartate to produce beta-alanine. The polypeptide is Aspartate 1-decarboxylase (Pseudomonas fluorescens).